A 29-amino-acid polypeptide reads, in one-letter code: Cyclotide vibi-D (29 aa).

Residues 1–29 (GLPVCGETCFGGRCNTPGCTCSYPICTRN) constitute a cross-link (cyclopeptide (Gly-Asn)). Intrachain disulfides connect Cys-5–Cys-19, Cys-9–Cys-21, and Cys-14–Cys-26.

In terms of processing, this is a cyclic peptide.

In terms of biological role, probably participates in a plant defense mechanism. Has moderate levels of cytotoxic activity, active against a human lymphoma cell line with an IC(50) of &gt;30 uM. This is Cyclotide vibi-D from Viola biflora (Yellow wood violet).